The primary structure comprises 427 residues: O-methyltransferase FrzF (427 aa).

Aspartate 281 provides a ligand contact to S-adenosyl-L-methionine. Catalysis depends on histidine 327, which acts as the Proton acceptor.

The protein belongs to the class I-like SAM-binding methyltransferase superfamily. Cation-independent O-methyltransferase family. As to quaternary structure, homodimer.

The catalysed reaction is (1S,4S)-4-[(4-hydroxyphenyl)methyl]-2,5-diazaspiro[bicyclo[3.2.1]octane-6,1'-cyclohexan]-4'-one + S-adenosyl-L-methionine = (1S,4S)-4-[(4-methoxyphenyl)methyl]-2,5-diazaspiro[bicyclo[3.2.1]octane-6,1'-cyclohexan]-4'-one + S-adenosyl-L-homocysteine + H(+). It carries out the reaction (1S,4S)-4-[(4-hydroxyphenyl)methyl]-2-methyl-2,5-diazaspiro[bicyclo[3.2.1]octane-6,1'-cyclohexan]-4'-one + S-adenosyl-L-methionine = (1S,4S)-4-[(4-methoxyphenyl)methyl]-2-methyl-2,5-diazaspiro[bicyclo[3.2.1]octane-6,1'-cyclohexan]-4'-one + S-adenosyl-L-homocysteine + H(+). Its pathway is secondary metabolite biosynthesis. Its function is as follows. O-methyltransferase; part of the gene cluster that mediates the biosynthesis of the alkaloid (-)-FR901483, a potent immunosuppressant that shows efficacy in animal models and a probable inhibitor of purine nucleotide biosynthesis by targeting phosphoribosylpyrophosphate amidotransferase (PPAT). Within the pathway, FrzF methylates the phenolic oxygen at position C4. The biosynthesis of (-)-FR901483 starts with the condensation of two L-tyrosines to yield (S,S)-dityrosyl-piperazine. This process occurs in 3 steps with the non-canonical nonribosomal peptide synthetase FrzA catalyzing the reduction of L-tyrosine into L-tyrosinal, the spontaneous condensation of 2 L-tyrosinal units, and the subsequent reduction by the NmrA-like family domain-containing oxidoreductase FrzB. The cytochrome P450 monooxygenase FrzC then performs coupling between N10 and C1' to morph the piperazine into a 1,4-diazabicyclo[3.2.1]octane spiro-fused to a 2,5-cyclohexadienone. The dienone portion is further reduced to cyclohexanone by the flavin-dependent reductase FrzD. The methyltranserases (MTs) FrzE and FrzF are then involved in the methylation at the C10' amine and the C4 phenolic oxygen, respectively. The order of the two MTs appear to be interchangeable. Cleavage of the C9-N10' bond by the dioxygenase FrzG then leads to formation of a conjugated iminium. In addition to the oxidation of C9, an additional dehydrogenation between C7 and C8 can occur to give a likely shunt product. The next biosynthetic step is the intramolecular aldol condensation catalyzed by the newly identified aldolase FrzH to yield an aza-tricyclic product with the formation of a C9-C3' bond. The short-chain dehydrogenase/reductase FrzI then produces dephospho-(-)-FR901483 that is phosphorylated at C4'-OH into (-)-FR901483 by the phosphotransferase FrzJ. The polypeptide is O-methyltransferase FrzF (Cladobotryum sp).